Here is a 526-residue protein sequence, read N- to C-terminus: 2-succinyl-5-enolpyruvyl-6-hydroxy-3-cyclohexene-1-carboxylate synthase (526 aa).

The protein belongs to the TPP enzyme family. MenD subfamily. In terms of assembly, homodimer. Mg(2+) is required as a cofactor. Mn(2+) serves as cofactor. Requires thiamine diphosphate as cofactor.

It catalyses the reaction isochorismate + 2-oxoglutarate + H(+) = 5-enolpyruvoyl-6-hydroxy-2-succinyl-cyclohex-3-ene-1-carboxylate + CO2. The protein operates within quinol/quinone metabolism; 1,4-dihydroxy-2-naphthoate biosynthesis; 1,4-dihydroxy-2-naphthoate from chorismate: step 2/7. Its pathway is quinol/quinone metabolism; menaquinone biosynthesis. In terms of biological role, catalyzes the thiamine diphosphate-dependent decarboxylation of 2-oxoglutarate and the subsequent addition of the resulting succinic semialdehyde-thiamine pyrophosphate anion to isochorismate to yield 2-succinyl-5-enolpyruvyl-6-hydroxy-3-cyclohexene-1-carboxylate (SEPHCHC). In Bdellovibrio bacteriovorus (strain ATCC 15356 / DSM 50701 / NCIMB 9529 / HD100), this protein is 2-succinyl-5-enolpyruvyl-6-hydroxy-3-cyclohexene-1-carboxylate synthase.